A 38-amino-acid polypeptide reads, in one-letter code: Large ribosomal subunit protein bL36 (38 aa).

The protein belongs to the bacterial ribosomal protein bL36 family.

The chain is Large ribosomal subunit protein bL36 from Thermotoga maritima (strain ATCC 43589 / DSM 3109 / JCM 10099 / NBRC 100826 / MSB8).